The following is a 600-amino-acid chain: NADH-quinone oxidoreductase subunit C/D (600 aa).

The NADH dehydrogenase I subunit C stretch occupies residues 1 to 190 (MVNNMTDLTA…SPFELTKAKQ (190 aa)). Positions 214–600 (DFMFLNLGPN…IDFVMSDVDR (387 aa)) are NADH dehydrogenase I subunit D.

In the N-terminal section; belongs to the complex I 30 kDa subunit family. This sequence in the C-terminal section; belongs to the complex I 49 kDa subunit family. In terms of assembly, NDH-1 is composed of 13 different subunits. Subunits NuoB, CD, E, F, and G constitute the peripheral sector of the complex.

Its subcellular location is the cell inner membrane. The enzyme catalyses a quinone + NADH + 5 H(+)(in) = a quinol + NAD(+) + 4 H(+)(out). NDH-1 shuttles electrons from NADH, via FMN and iron-sulfur (Fe-S) centers, to quinones in the respiratory chain. The immediate electron acceptor for the enzyme in this species is believed to be ubiquinone. Couples the redox reaction to proton translocation (for every two electrons transferred, four hydrogen ions are translocated across the cytoplasmic membrane), and thus conserves the redox energy in a proton gradient. This chain is NADH-quinone oxidoreductase subunit C/D, found in Escherichia coli O127:H6 (strain E2348/69 / EPEC).